Consider the following 160-residue polypeptide: Putative pre-16S rRNA nuclease (160 aa).

The protein belongs to the YqgF nuclease family.

The protein localises to the cytoplasm. In terms of biological role, could be a nuclease involved in processing of the 5'-end of pre-16S rRNA. In Rhodopseudomonas palustris (strain BisB5), this protein is Putative pre-16S rRNA nuclease.